A 1205-amino-acid polypeptide reads, in one-letter code: Bromodomain and PHD finger-containing protein 3 (1205 aa).

Disordered regions lie at residues M1 to P27 and N75 to M121. S17 is modified (phosphoserine). Polar residues predominate over residues N75 to P84. Over residues K89 to K99 the composition is skewed to basic residues. The PHD-type 1 zinc-finger motif lies at D212–S262. The C2HC pre-PHD-type zinc-finger motif lies at P266 to V299. Residues L323–S387 form a PHD-type 2 zinc finger. The disordered stretch occupies residues S387–P472. Phosphoserine occurs at positions 400 and 403. The span at D417–E432 shows a compositional bias: acidic residues. Positions V444 to I456 are enriched in basic residues. K447, K449, and K671 each carry N6-acetyllysine. The Bromo domain maps to L589 to A693. Phosphoserine is present on residues S713 and S740. The disordered stretch occupies residues R779–R897. The span at L817 to R827 shows a compositional bias: acidic residues. Residues E839–E851 are compositionally biased toward low complexity. At S900 the chain carries Phosphoserine. 2 disordered regions span residues L907–R926 and F931–S1015. Over residues R942–G955 the composition is skewed to basic and acidic residues. A phosphoserine mark is found at S962 and S965. The span at S980–Q991 shows a compositional bias: basic and acidic residues. The region spanning P1076 to E1159 is the PWWP domain.

Component of some HBO1 complex composed of KAT7/HBO1, MEAF6, ING4 or ING5, and BRPF3. Component of the MOZ/MORF complex composed at least of ING5, KAT6A, KAT6B, MEAF6 and one of BRPF1, BRD1/BRPF2 and BRPF3. Interacts with KAT7/HBO1; the interaction is direct.

It localises to the nucleus. Its function is as follows. Scaffold subunit of various histone acetyltransferase (HAT) complexes, such as the MOZ/MORF and HBO1 complexes, which have a histone H3 acetyltransferase activity. Plays a role in DNA replication initiation by directing KAT7/HBO1 specificity towards histone H3 'Lys-14' acetylation (H3K14ac), thereby facilitating the activation of replication origins. Component of the MOZ/MORF complex which has a histone H3 acetyltransferase activity. The sequence is that of Bromodomain and PHD finger-containing protein 3 from Homo sapiens (Human).